Here is a 414-residue protein sequence, read N- to C-terminus: Secernin-1 (414 aa).

Ala-2 carries the post-translational modification N-acetylalanine. The active site involves Cys-9.

It belongs to the peptidase C69 family. Secernin subfamily.

It localises to the cytoplasm. Its function is as follows. Regulates exocytosis in mast cells. Increases both the extent of secretion and the sensitivity of mast cells to stimulation with calcium. This Homo sapiens (Human) protein is Secernin-1 (SCRN1).